The primary structure comprises 132 residues: NADPH-dependent 7-cyano-7-deazaguanine reductase (132 aa).

The Thioimide intermediate role is filled by C34. Catalysis depends on D41, which acts as the Proton donor. Residues 56 to 58 (IEL) and 75 to 76 (HE) contribute to the substrate site.

Belongs to the GTP cyclohydrolase I family. QueF type 1 subfamily.

It is found in the cytoplasm. The catalysed reaction is 7-aminomethyl-7-carbaguanine + 2 NADP(+) = 7-cyano-7-deazaguanine + 2 NADPH + 3 H(+). It functions in the pathway tRNA modification; tRNA-queuosine biosynthesis. Catalyzes the NADPH-dependent reduction of 7-cyano-7-deazaguanine (preQ0) to 7-aminomethyl-7-deazaguanine (preQ1). The sequence is that of NADPH-dependent 7-cyano-7-deazaguanine reductase from Vesicomyosocius okutanii subsp. Calyptogena okutanii (strain HA).